We begin with the raw amino-acid sequence, 456 residues long: Na(+)/H(+) antiporter NhaA 3 (456 aa).

Helical transmembrane passes span 32–52 (IEATSGAVLLLATVVALTLSN), 87–107 (GLMTLFFFIVALEIKREVVLG), 114–134 (MVALSVVAAAGGMLVPMGLYL), 145–165 (GWGVVMPTDTAFVIGCLALLG), 174–194 (VFLLSLAVVDDLAAILVVAVG), 202–222 (TALALGAVGLVIIRGMALLGV), 233–253 (AIIWLAVNASGIHATIVGVIL), 318–338 (WVAFGVMPLFALANAGVPITI), 347–367 (LAVMAGFVLGKPIGVTAFAWL), 382–402 (WGGLVGGALLTGIGFTMALFI), and 417–437 (LGILAASVVSSVAGLTLLCAL).

Belongs to the NhaA Na(+)/H(+) (TC 2.A.33) antiporter family.

Its subcellular location is the cell inner membrane. It catalyses the reaction Na(+)(in) + 2 H(+)(out) = Na(+)(out) + 2 H(+)(in). Its function is as follows. Na(+)/H(+) antiporter that extrudes sodium in exchange for external protons. This Acidiphilium cryptum (strain JF-5) protein is Na(+)/H(+) antiporter NhaA 3.